Consider the following 469-residue polypeptide: Bile acid receptor (469 aa).

Residue Lys119 forms a Glycyl lysine isopeptide (Lys-Gly) (interchain with G-Cter in SUMO1) linkage. The segment at residues 121–196 (DELCVVCGDR…MGMLAECLLT (76 aa)) is a DNA-binding region (nuclear receptor). The segment at 124-144 (CVVCGDRASGYHYNALTCEGC) adopts an NR C4-type zinc-finger fold. Phosphoserine; by PKC/PRKCA occurs at positions 132 and 151. The residue at position 154 (Lys154) is an N6-acetyllysine; by EP300. The segment at 160–184 (CKNGGNCVMDMYMRRKCQDCRLRKC) adopts an NR C4-type zinc-finger fold. An N6-methyllysine; by SETD7 modification is found at Lys203. Lys210 carries the post-translational modification N6-acetyllysine; by EP300. The region spanning 245-469 (DQQTLLDYIM…PLLCEIWDVQ (225 aa)) is the NR LBD domain. Residue Lys272 forms a Glycyl lysine isopeptide (Lys-Gly) (interchain with G-Cter in SUMO1) linkage. Arg328 contributes to the 3beta,7beta-dihydroxy-5beta-cholan-24-oate binding site. Residues Arg328, Tyr358, and Tyr366 each contribute to the chenodeoxycholate site. A 3beta,7beta-dihydroxy-5beta-cholan-24-oate-binding site is contributed by Tyr366. Thr439 bears the Phosphothreonine; by PKC/PRKCZ mark. Residue His444 coordinates chenodeoxycholate.

It belongs to the nuclear hormone receptor family. NR1 subfamily. As to quaternary structure, heterodimer with RXRA; the heterodimerization enhances the binding affinity for LXXLL motifs from coactivators. Binds DNA predominantly as a heterodimer with RXRA. After activation by agonist binding interacts with coactivators. Interacts with NCOA1, NCOA2, PPARGC1A, CARM1, SETD7, PRMT1, GPS2, SMARCA4 and MED1, EP300 and SMARCD1. Interacts with XRCC5 and XRCC6; decreasing NR1H4/FXR transactivation activity towards ABCB11/BSEP. Interacts with PAGR1 AND NCOA6; indicative for an association with an MLL2/MLL3 complex (ASCOM). In terms of processing, acetylated by EP300. Lys-210 as is the major acetylation site for EP300; the dynamicly regulated acetylation inhibits heterodimerization with RXRA and transactivation activity. Deacetylated by SIRT1. Methylation may increase transactivation of target genes. Post-translationally, phosphorylation by PKC/PRKCA increases transactivation activity by promoting association with PPARGC1A. In terms of processing, sumoylated upon ligand binding.

The protein resides in the nucleus. Ligand-activated transcription factor. Receptor for bile acids (BAs) such as chenodeoxycholic acid (CDCA), lithocholic acid, deoxycholic acid (DCA) and allocholic acid (ACA). Plays a essential role in BA homeostasis through the regulation of genes involved in BA synthesis, conjugation and enterohepatic circulation. Also regulates lipid and glucose homeostasis and is involved innate immune response. The FXR-RXR heterodimer binds predominantly to farnesoid X receptor response elements (FXREs) containing two inverted repeats of the consensus sequence 5'-AGGTCA-3' in which the monomers are spaced by 1 nucleotide (IR-1) but also to tandem repeat DR1 sites with lower affinity, and can be activated by either FXR or RXR-specific ligands. It is proposed that monomeric nuclear receptors such as NR5A2/LRH-1 bound to coregulatory nuclear responsive element (NRE) halfsites located in close proximity to FXREs modulate transcriptional activity. In the liver activates transcription of the corepressor NR0B2 thereby indirectly inhibiting CYP7A1 and CYP8B1 (involved in BA synthesis) implicating at least in part histone demethylase KDM1A resulting in epigenomic repression, and SLC10A1/NTCP (involved in hepatic uptake of conjugated BAs). Activates transcription of the repressor MAFG (involved in regulation of BA synthesis). Activates transcription of SLC27A5/BACS and BAAT (involved in BA conjugation), ABCB11/BSEP (involved in bile salt export) by directly recruiting histone methyltransferase CARM1, and ABCC2/MRP2 (involved in secretion of conjugated BAs) and ABCB4 (involved in secretion of phosphatidylcholine in the small intestine). Activates transcription of SLC27A5/BACS and BAAT (involved in BA conjugation), ABCB11/BSEP (involved in bile salt export) by directly recruiting histone methyltransferase CARM1, and ABCC2/MRP2 (involved in secretion of conjugated BAs) and ABCB4 (involved in secretion of phosphatidylcholine in the small intestine). In the intestine activates FGF19 expression and secretion leading to hepatic CYP7A1 repression. The function also involves the coordinated induction of hepatic KLB/beta-klotho expression. Regulates transcription of liver UGT2B4 and SULT2A1 involved in BA detoxification; binding to the UGT2B4 promoter seems to imply a monomeric transactivation independent of RXRA. Modulates lipid homeostasis by activating liver NR0B2/SHP-mediated repression of SREBF1 (involved in de novo lipogenesis), expression of PLTP (involved in HDL formation), SCARB1 (involved in HDL hepatic uptake), APOE, APOC1, APOC4, PPARA (involved in beta-oxidation of fatty acids), VLDLR and SDC1 (involved in the hepatic uptake of LDL and IDL remnants), and inhibiting expression of MTTP (involved in VLDL assembly). Increases expression of APOC2 (promoting lipoprotein lipase activity implicated in triglyceride clearance). Transrepresses APOA1 involving a monomeric competition with NR2A1 for binding to a DR1 element. Also reduces triglyceride clearance by inhibiting expression of ANGPTL3 and APOC3 (both involved in inhibition of lipoprotein lipase). Involved in glucose homeostasis by modulating hepatic gluconeogenesis through activation of NR0B2/SHP-mediated repression of respective genes. Modulates glycogen synthesis (inducing phosphorylation of glycogen synthase kinase-3). Modulates glucose-stimulated insulin secretion and is involved in insulin resistance. Involved in intestinal innate immunity. Plays a role in protecting the distal small intestine against bacterial overgrowth and preservation of the epithelial barrier. Down-regulates inflammatory cytokine expression in several types of immune cells including macrophages and mononuclear cells. Mediates trans-repression of TLR4-induced cytokine expression; the function seems to require its sumoylation and prevents N-CoR nuclear receptor corepressor clearance from target genes such as IL1B and NOS2. Involved in the TLR9-mediated protective mechanism in intestinal inflammation. Plays an anti-inflammatory role in liver inflammation; proposed to inhibit pro-inflammatory (but not antiapoptotic) NF-kappa-B signaling. The chain is Bile acid receptor (Nr1h4) from Rattus norvegicus (Rat).